Reading from the N-terminus, the 511-residue chain is Frizzled/smoothened-like sans CRD protein C (511 aa).

The N-terminal stretch at 1–25 is a signal peptide; the sequence is MNQINKFIKNLYLIIITIILIIVIS. Residues 26–93 lie on the Extracellular side of the membrane; sequence NDNNGLFING…QWESYFEMSL (68 aa). The N-linked (GlcNAc...) asparagine glycan is linked to N51. A helical membrane pass occupies residues 94-114; that stretch reads IMGSISMFASLFLIITYSPLI. The Cytoplasmic segment spans residues 115 to 122; the sequence is NKKHTRHT. The helical transmembrane segment at 123 to 143 threads the bilayer; it reads VGILCMSIGIFFVMVSDGRQL. Residues 144–172 are Extracellular-facing; sequence WDIESPGEYKKYCPDTGRYARQSDTKCLT. The chain crosses the membrane as a helical span at residues 173–193; sequence TGLFFQFGCVTAIGWWSILAV. Topologically, residues 194–209 are cytoplasmic; the sequence is DLWMTIAKKVQTTKKQ. The helical transmembrane segment at 210–230 threads the bilayer; that stretch reads LLYYLIGINTVSLILTFGPVV. Over 231-253 the chain is Extracellular; sequence KNQYGFGNAAIGCWMLDLKYQYG. Residues 254 to 274 traverse the membrane as a helical segment; sequence FFWIPVGICLSVGSVFIGLIF. Residues 275–295 lie on the Cytoplasmic side of the membrane; that stretch reads WEIYKISDAVKKRYLKKHIKP. Residues 296 to 316 traverse the membrane as a helical segment; the sequence is LCLIVLMCLEFLYMFIYYSYI. Topologically, residues 317–357 are extracellular; sequence TANQPTYNKHVAEYIMCLIINAANVPGSYTCQLKTVSPTAQ. Residues 358–378 traverse the membrane as a helical segment; that stretch reads FLFLIAIRLMGLQGLIFYGLT. The Cytoplasmic portion of the chain corresponds to 379–511; sequence AATKKVWANS…RVNSPDNLQP (133 aa). The disordered stretch occupies residues 430–511; that stretch reads NGYTTGGSDN…RVNSPDNLQP (82 aa). Residues 433–443 show a composition bias toward gly residues; that stretch reads TTGGSDNGVGS. Positions 451–460 are enriched in polar residues; it reads KSSSNGGAQD. Positions 461-485 are enriched in low complexity; sequence NNNNNNNNNNNNNNNNNNNNNNNNN. Polar residues predominate over residues 486 to 511; sequence SSSLEISGVESNNSTPRVNSPDNLQP.

The protein belongs to the G-protein coupled receptor Fz/Smo family.

It localises to the membrane. This Dictyostelium discoideum (Social amoeba) protein is Frizzled/smoothened-like sans CRD protein C (fscC).